We begin with the raw amino-acid sequence, 847 residues long: Alanine--tRNA ligase (847 aa).

4 residues coordinate Zn(2+): His554, His558, Cys656, and His660.

It belongs to the class-II aminoacyl-tRNA synthetase family. Zn(2+) is required as a cofactor.

Its subcellular location is the cytoplasm. It catalyses the reaction tRNA(Ala) + L-alanine + ATP = L-alanyl-tRNA(Ala) + AMP + diphosphate. Catalyzes the attachment of alanine to tRNA(Ala) in a two-step reaction: alanine is first activated by ATP to form Ala-AMP and then transferred to the acceptor end of tRNA(Ala). Also edits incorrectly charged Ser-tRNA(Ala) and Gly-tRNA(Ala) via its editing domain. The chain is Alanine--tRNA ligase from Helicobacter acinonychis (strain Sheeba).